The sequence spans 1293 residues: Phosphoribosylformylglycinamidine synthase (1293 aa).

ATP contacts are provided by residues 305–316 (GAATGSGGEIRD) and A676. Mg(2+) contacts are provided by D677, E716, N720, and D884. Residue S886 participates in ATP binding. The 254-residue stretch at 1040-1293 (MAILREQGVN…MFRNARVKLG (254 aa)) folds into the Glutamine amidotransferase type-1 domain. C1133 acts as the Nucleophile in catalysis. Active-site residues include H1258 and E1260.

In the N-terminal section; belongs to the FGAMS family. Monomer.

It is found in the cytoplasm. It catalyses the reaction N(2)-formyl-N(1)-(5-phospho-beta-D-ribosyl)glycinamide + L-glutamine + ATP + H2O = 2-formamido-N(1)-(5-O-phospho-beta-D-ribosyl)acetamidine + L-glutamate + ADP + phosphate + H(+). Its pathway is purine metabolism; IMP biosynthesis via de novo pathway; 5-amino-1-(5-phospho-D-ribosyl)imidazole from N(2)-formyl-N(1)-(5-phospho-D-ribosyl)glycinamide: step 1/2. Its function is as follows. Phosphoribosylformylglycinamidine synthase involved in the purines biosynthetic pathway. Catalyzes the ATP-dependent conversion of formylglycinamide ribonucleotide (FGAR) and glutamine to yield formylglycinamidine ribonucleotide (FGAM) and glutamate. The chain is Phosphoribosylformylglycinamidine synthase from Shewanella denitrificans (strain OS217 / ATCC BAA-1090 / DSM 15013).